The primary structure comprises 616 residues: Secretogranin-2 (616 aa).

A signal peptide spans 1 to 27 (MAEAKTHWLGASLSLILLIFLLATAEA). A propeptide spanning residues 28-30 (ASF) is cleaved from the precursor. Disordered stretches follow at residues 68 to 104 (QAHKEESSPDYNPYQGVSVPLQQKENSDLPESSRDSL) and 120 to 146 (AENEPQSSLKENKPYTLNSEKNFPMDM). The segment covering 92–104 (ENSDLPESSRDSL) has biased composition (basic and acidic residues). Polar residues predominate over residues 122–140 (NEPQSSLKENKPYTLNSEK). The residue at position 150 (Y150) is a Sulfotyrosine. Phosphoserine is present on residues S173, S267, S431, S531, S554, and S555. The span at 255–283 (KIESQTQEEVRDSKENIEKNEQINDEMKR) shows a compositional bias: basic and acidic residues. A disordered region spans residues 255 to 290 (KIESQTQEEVRDSKENIEKNEQINDEMKRSGQMGLQ). Positions 548–560 (ERLNQHSSQETDK) are enriched in basic and acidic residues. Residues 548–582 (ERLNQHSSQETDKLALVSKRLPVATPKSDDAPNRQ) are disordered.

This sequence belongs to the chromogranin/secretogranin protein family. As to quaternary structure, interacts with Secretogranin III/SCG3.

It is found in the secreted. Functionally, neuroendocrine protein of the granin family that regulates the biogenesis of secretory granules. The sequence is that of Secretogranin-2 (SCG2) from Sus scrofa (Pig).